Consider the following 217-residue polypeptide: Probable GTP-binding protein EngB (217 aa).

Residues 33–217 (GPTEIAFAGR…RAAIELAVAR (185 aa)) form the EngB-type G domain. GTP contacts are provided by residues 41–48 (GRSNVGKS), 68–72 (GRTQE), 95–98 (DMPG), 162–165 (TKTD), and 196–198 (TSS). 2 residues coordinate Mg(2+): serine 48 and threonine 70.

This sequence belongs to the TRAFAC class TrmE-Era-EngA-EngB-Septin-like GTPase superfamily. EngB GTPase family. It depends on Mg(2+) as a cofactor.

Functionally, necessary for normal cell division and for the maintenance of normal septation. This Sinorhizobium medicae (strain WSM419) (Ensifer medicae) protein is Probable GTP-binding protein EngB.